The chain runs to 399 residues: Methylthioribose kinase (399 aa).

ATP contacts are provided by residues asparagine 40, lysine 57, and 111 to 113; that span reads EDL. Aspartate 229 is a binding site for substrate. Position 246-248 (246-248) interacts with ATP; the sequence is DAE. A substrate-binding site is contributed by arginine 344.

It belongs to the methylthioribose kinase family. In terms of assembly, homodimer.

The catalysed reaction is 5-(methylsulfanyl)-D-ribose + ATP = 5-(methylsulfanyl)-alpha-D-ribose 1-phosphate + ADP + H(+). It participates in amino-acid biosynthesis; L-methionine biosynthesis via salvage pathway; S-methyl-5-thio-alpha-D-ribose 1-phosphate from S-methyl-5'-thioadenosine (hydrolase route): step 2/2. Catalyzes the phosphorylation of methylthioribose into methylthioribose-1-phosphate. In Enterobacter sp. (strain 638), this protein is Methylthioribose kinase.